An 830-amino-acid chain; its full sequence is Probable glucan 1,3-beta-glucosidase D (830 aa).

The span at 1-34 (MPSQSRSRDRYRGRDTEYTRRRYPDEHDYSHDDH) shows a compositional bias: basic and acidic residues. The tract at residues 1–279 (MPSQSRSRDR…PPMDARWPKG (279 aa)) is disordered. Residues 1-301 (MPSQSRSRDR…GRPFWKQKKW (301 aa)) lie on the Cytoplasmic side of the membrane. The segment covering 35–51 (DYDYDDDDDDNDDLEQD) has biased composition (acidic residues). 2 stretches are compositionally biased toward basic and acidic residues: residues 52–98 (VTER…ERRR) and 110–175 (QHRE…KHQS). Over residues 181–194 (SASHLLSADALARL) the composition is skewed to low complexity. 3 stretches are compositionally biased toward basic and acidic residues: residues 198-215 (YEKE…AAKA), 228-243 (EQER…DRSR), and 253-264 (EEGRGPEMEFRR). The chain crosses the membrane as a helical; Signal-anchor for type II membrane protein span at residues 302-322 (LIGIGVVILILVIVIPVAVVV). At 323–830 (SKKHNDKPNA…PDFGSLPEYY (508 aa)) the chain is on the extracellular side. The interval 327–351 (NDKPNATTTQPDGTTPSNSNLDGLS) is disordered. The span at 330 to 348 (PNATTTQPDGTTPSNSNLD) shows a compositional bias: polar residues. Residues N331, N376, N381, N393, N546, and N558 are each glycosylated (N-linked (GlcNAc...) asparagine). E597 serves as the catalytic Proton donor. 4 N-linked (GlcNAc...) asparagine glycosylation sites follow: N610, N636, N669, and N689. Residue E701 is the Nucleophile of the active site.

The protein belongs to the glycosyl hydrolase 5 (cellulase A) family.

It localises to the cell membrane. It carries out the reaction Successive hydrolysis of beta-D-glucose units from the non-reducing ends of (1-&gt;3)-beta-D-glucans, releasing alpha-glucose.. Functionally, glucosidase involved in the degradation of cellulosic biomass. Active on lichenan. This Aspergillus clavatus (strain ATCC 1007 / CBS 513.65 / DSM 816 / NCTC 3887 / NRRL 1 / QM 1276 / 107) protein is Probable glucan 1,3-beta-glucosidase D (exgD).